Consider the following 431-residue polypeptide: L-ornithine N(5)-monooxygenase (431 aa).

FAD contacts are provided by residues 40–48 (EKLPTFSWH) and Q59. K64 is a binding site for substrate. Residues 202–205 (CGQS) and R228 contribute to the NADP(+) site. Residues 242 to 245 (NSLY) and N273 each bind substrate. 273–275 (NYS) is a binding site for NADP(+). 399–401 (TLL) is a binding site for FAD. S402 provides a ligand contact to substrate.

It belongs to the lysine N(6)-hydroxylase/L-ornithine N(5)-oxygenase family. FAD is required as a cofactor.

It is found in the cytoplasm. Its subcellular location is the nucleus. It catalyses the reaction L-ornithine + NADPH + O2 = N(5)-hydroxy-L-ornithine + NADP(+) + H2O. The enzyme catalyses L-ornithine + NADH + O2 = N(5)-hydroxy-L-ornithine + NAD(+) + H2O. It participates in siderophore biosynthesis; ferrichrome biosynthesis. In terms of biological role, catalyzes the conversion of L-ornithine to N(5)-hydroxyornithine, the first step in the biosynthesis of all hydroxamate-containing siderophores, such as ferrichrome. The chain is L-ornithine N(5)-monooxygenase from Schizosaccharomyces pombe (strain 972 / ATCC 24843) (Fission yeast).